The primary structure comprises 405 residues: Argininosuccinate synthase (405 aa).

Residues 10–18 (AYSGGLDTS) and A37 each bind ATP. The L-citrulline site is built by Y88 and S93. G118 contacts ATP. 3 residues coordinate L-aspartate: T120, N124, and D125. N124 contributes to the L-citrulline binding site. Residues R128, S179, S188, E264, and Y276 each contribute to the L-citrulline site.

Belongs to the argininosuccinate synthase family. Type 1 subfamily. As to quaternary structure, homotetramer.

It localises to the cytoplasm. It carries out the reaction L-citrulline + L-aspartate + ATP = 2-(N(omega)-L-arginino)succinate + AMP + diphosphate + H(+). It participates in amino-acid biosynthesis; L-arginine biosynthesis; L-arginine from L-ornithine and carbamoyl phosphate: step 2/3. This is Argininosuccinate synthase from Pseudomonas entomophila (strain L48).